We begin with the raw amino-acid sequence, 616 residues long: Ectonucleoside triphosphate diphosphohydrolase 4 (616 aa).

The Cytoplasmic portion of the chain corresponds to 1 to 33 (MGRIGISCLFPASWHFSISPVGCPRILNTNLRQ). Residues 34–54 (IMVISVLAAAVSLLYFSVVII) traverse the membrane as a helical segment. Residues 55–559 (RNKYGRLTRD…ASHTHWRGVS (505 aa)) are Lumenal-facing. Catalysis depends on Glu222, which acts as the Proton acceptor. Cys368 and Cys395 are oxidised to a cystine. 2 N-linked (GlcNAc...) asparagine glycosylation sites follow: Asn404 and Asn407. The cysteines at positions 461 and 490 are disulfide-linked. The helical transmembrane segment at 560–580 (FVYNHYLFSGCFLVVLLAILL) threads the bilayer. The Cytoplasmic segment spans residues 581–616 (YLLRLRRIHRRTPRSSSAAALWMEEGLPAQNAPGTL).

This sequence belongs to the GDA1/CD39 NTPase family. The cofactor is Ca(2+). It depends on Mg(2+) as a cofactor. In terms of tissue distribution, ubiquitous. Highest expression in testis and lowest in bladder.

It localises to the cytoplasmic vesicle. The protein localises to the autophagosome membrane. Its subcellular location is the lysosome membrane. The protein resides in the golgi apparatus membrane. The catalysed reaction is a ribonucleoside 5'-diphosphate + H2O = a ribonucleoside 5'-phosphate + phosphate + H(+). It carries out the reaction a ribonucleoside 5'-triphosphate + H2O = a ribonucleoside 5'-diphosphate + phosphate + H(+). It catalyses the reaction UDP + H2O = UMP + phosphate + H(+). The enzyme catalyses UTP + H2O = UDP + phosphate + H(+). The catalysed reaction is CTP + H2O = CDP + phosphate + H(+). It carries out the reaction GDP + H2O = GMP + phosphate + H(+). It catalyses the reaction GTP + H2O = GDP + phosphate + H(+). The enzyme catalyses 5-methyl-UTP + H2O = 5-methyl-UDP + phosphate + H(+). In terms of biological role, catalyzes the hydrolysis of nucleoside triphosphates and diphosphates in a calcium- or magnesium-dependent manner, with a preference for pyrimidines. Preferentially hydrolyzes UTP and TTP. AMP, ADP, ATP and UMP are not substrates. Preferentially activated by Ca(2+) over Mg(2+). Its function is as follows. Has a broad substrate specificity with the ability of cleaving all nucleotide di- and triphosphates with the exception of adenosine di- and triphosphate (ADP and ATP). Preferentially hydrolyzes CTP, UDP, CDP, GTP and GDP. Can use either Ca(2+) or Mg(2+) equally. The polypeptide is Ectonucleoside triphosphate diphosphohydrolase 4 (Homo sapiens (Human)).